Consider the following 172-residue polypeptide: 6,7-dimethyl-8-ribityllumazine synthase (172 aa).

5-amino-6-(D-ribitylamino)uracil is bound by residues phenylalanine 24, 58–60, and 82–84; these read ALE and AVI. 87–88 is a binding site for (2S)-2-hydroxy-3-oxobutyl phosphate; the sequence is ET. The active-site Proton donor is histidine 90. Asparagine 115 is a binding site for 5-amino-6-(D-ribitylamino)uracil. Arginine 129 contacts (2S)-2-hydroxy-3-oxobutyl phosphate. Residues 150–172 are disordered; the sequence is ALEQLDGDEDDEGEGEDDEEERA. The segment covering 154-172 has biased composition (acidic residues); that stretch reads LDGDEDDEGEGEDDEEERA.

It belongs to the DMRL synthase family.

It carries out the reaction (2S)-2-hydroxy-3-oxobutyl phosphate + 5-amino-6-(D-ribitylamino)uracil = 6,7-dimethyl-8-(1-D-ribityl)lumazine + phosphate + 2 H2O + H(+). The protein operates within cofactor biosynthesis; riboflavin biosynthesis; riboflavin from 2-hydroxy-3-oxobutyl phosphate and 5-amino-6-(D-ribitylamino)uracil: step 1/2. Its function is as follows. Catalyzes the formation of 6,7-dimethyl-8-ribityllumazine by condensation of 5-amino-6-(D-ribitylamino)uracil with 3,4-dihydroxy-2-butanone 4-phosphate. This is the penultimate step in the biosynthesis of riboflavin. The protein is 6,7-dimethyl-8-ribityllumazine synthase of Paraburkholderia phymatum (strain DSM 17167 / CIP 108236 / LMG 21445 / STM815) (Burkholderia phymatum).